A 344-amino-acid polypeptide reads, in one-letter code: Heat-inducible transcription repressor HrcA (344 aa).

Belongs to the HrcA family.

Functionally, negative regulator of class I heat shock genes (grpE-dnaK-dnaJ and groELS operons). Prevents heat-shock induction of these operons. The chain is Heat-inducible transcription repressor HrcA from Geobacillus sp. (strain WCH70).